The primary structure comprises 258 residues: MIEMISISAAFLLSLLCETCGLVLPKSSDLAIAASNYTIIKPDLSARLDPVKAPKARRKRYISQNDMIEIVEYHNQVRGKVFPPAANMEYMVWDDNLAKLAEAWAATCIWDHGPSYLLKFLGQNLSVRTGRYKSILQLVKPWYDEVKDYAFPYPQECNPRCPLRCYGPMCTHYTQMVWATTNRIGCAIHTCHNINVWGAVWRRAVYLVCNYSPKGNWIGEAPYTIGVPCSACPPSYGGSCSDNQCFPGITSNYLHWFK.

Residues 1–21 (MIEMISISAAFLLSLLCETCG) form the signal peptide. Positions 22–60 (LVLPKSSDLAIAASNYTIIKPDLSARLDPVKAPKARRKR) are excised as a propeptide. Asn36 and Asn124 each carry an N-linked (GlcNAc...) asparagine glycan. Positions 71–211 (VEYHNQVRGK…RRAVYLVCNY (141 aa)) constitute an SCP domain.

Belongs to the CRISP family.

It localises to the secreted. Functionally, serine protease inhibitor which displays weak inhibitory activity against trypsin. May be involved in facial patterning during embryonic development. In Xenopus laevis (African clawed frog), this protein is Peptidase inhibitor 15 (pi15).